The following is a 450-amino-acid chain: NAD-specific glutamate dehydrogenase (450 aa).

The substrate site is built by Lys90, Gln111, and Lys114. Catalysis depends on Lys126, which acts as the Proton donor. A substrate-binding site is contributed by Gly165. The NAD(+) site is built by Thr210 and Asn241. Position 381 (Ser381) interacts with substrate.

The protein belongs to the Glu/Leu/Phe/Val dehydrogenases family. In terms of assembly, homohexamer.

The catalysed reaction is L-glutamate + NAD(+) + H2O = 2-oxoglutarate + NH4(+) + NADH + H(+). It functions in the pathway amino-acid degradation; L-glutamate degradation via hydroxyglutarate pathway; crotonoyl-CoA from L-glutamate: step 1/5. The protein is NAD-specific glutamate dehydrogenase (gdh) of Clostridium symbiosum (Bacteroides symbiosus).